Here is a 461-residue protein sequence, read N- to C-terminus: tRNA modification GTPase MnmE (461 aa).

Residues Arg-22, Glu-87, and Arg-126 each coordinate (6S)-5-formyl-5,6,7,8-tetrahydrofolate. The 161-residue stretch at 222–382 (GITAVIAGKP…LENKLYEILI (161 aa)) folds into the TrmE-type G domain. Asn-232 is a binding site for K(+). GTP is bound by residues 232–237 (NVGKSS), 251–257 (TDIPGTT), 276–279 (DTAG), and 363–365 (SAR). Residue Ser-236 coordinates Mg(2+). K(+)-binding residues include Thr-251, Ile-253, and Thr-256. Thr-257 is a binding site for Mg(2+). Lys-461 serves as a coordination point for (6S)-5-formyl-5,6,7,8-tetrahydrofolate.

Belongs to the TRAFAC class TrmE-Era-EngA-EngB-Septin-like GTPase superfamily. TrmE GTPase family. As to quaternary structure, homodimer. Heterotetramer of two MnmE and two MnmG subunits. Requires K(+) as cofactor.

It localises to the cytoplasm. In terms of biological role, exhibits a very high intrinsic GTPase hydrolysis rate. Involved in the addition of a carboxymethylaminomethyl (cmnm) group at the wobble position (U34) of certain tRNAs, forming tRNA-cmnm(5)s(2)U34. The sequence is that of tRNA modification GTPase MnmE from Carboxydothermus hydrogenoformans (strain ATCC BAA-161 / DSM 6008 / Z-2901).